The following is a 186-amino-acid chain: MKMKDELINLIINEGCIKFGHFVLTSGKESNYYIDIKSLITNPKALRIIAKLIKEKAEELNLNYDKIAGPELGAVPIATALSLETNKPLLIVRKKKKEHGTGKVIEGNVQKGDKVLLVEDVTTTGGSVIRAAKILREHGADVVGIFVVVDREEGAKENIEKEGFKFYPLVLVSELFKAAGISKDQS.

5-phospho-alpha-D-ribose 1-diphosphate-binding positions include arginine 93, lysine 94, lysine 97, histidine 99, and 119–127; that span reads EDVTTTGGS. Orotate-binding residues include threonine 123 and arginine 151.

The protein belongs to the purine/pyrimidine phosphoribosyltransferase family. PyrE subfamily. Homodimer. Requires Mg(2+) as cofactor.

It catalyses the reaction orotidine 5'-phosphate + diphosphate = orotate + 5-phospho-alpha-D-ribose 1-diphosphate. It participates in pyrimidine metabolism; UMP biosynthesis via de novo pathway; UMP from orotate: step 1/2. Its function is as follows. Catalyzes the transfer of a ribosyl phosphate group from 5-phosphoribose 1-diphosphate to orotate, leading to the formation of orotidine monophosphate (OMP). This Pyrococcus horikoshii (strain ATCC 700860 / DSM 12428 / JCM 9974 / NBRC 100139 / OT-3) protein is Orotate phosphoribosyltransferase.